A 366-amino-acid polypeptide reads, in one-letter code: UDP-N-acetylenolpyruvoylglucosamine reductase (366 aa).

In terms of domain architecture, FAD-binding PCMH-type spans 29 to 203 (VGPVARTLVT…LEVEFALDAS (175 aa)). The active site involves Arg177. Residue Ser258 is the Proton donor of the active site. Glu358 is an active-site residue.

Belongs to the MurB family. FAD is required as a cofactor.

The protein resides in the cytoplasm. The catalysed reaction is UDP-N-acetyl-alpha-D-muramate + NADP(+) = UDP-N-acetyl-3-O-(1-carboxyvinyl)-alpha-D-glucosamine + NADPH + H(+). Its pathway is cell wall biogenesis; peptidoglycan biosynthesis. Cell wall formation. The chain is UDP-N-acetylenolpyruvoylglucosamine reductase from Mycobacterium ulcerans (strain Agy99).